The chain runs to 454 residues: MARLKPLSGFPEFLPSGQMVENHVTRILEETFELHGFAPIRTRAVEPMEQLTRKGEIDKEVYVVDRLHADPHDTRSGKDRLGLHFDLTVPFARYVLENAGHLYFPFRRYQIQKVWRGERPQEGRYREFTQADIDIVGDQTLAEHHDVETPLVMLSALERLHTELGFPTVTMHVNNRKLSEGFYRGLGIADPMAVLQRVDKYDKIGPDAVRKLLVDELNLSDDAAAKCVALASIQSTDDSFIAKVRELGVANDMLEEGLDSLNRVVAAVNKAVPGRMVANLKIARGLDYYTGTVYETELTGHESMGSVCSGGRYESLASDGKHVYPGVGISLGLTRLLAPILSRGELSSSRSVPSAVLVAVNTEEDRATSEVIASALRSRGIPCEVAPKADKFGKQIKHADRRGIPFVWFPGVKHADYRDADTVKDIRSGDQVEADAGAWNPPTEDLHPGVIGTW.

A disordered region spans residues 434 to 454 (ADAGAWNPPTEDLHPGVIGTW).

The protein belongs to the class-II aminoacyl-tRNA synthetase family. Homodimer.

The protein localises to the cytoplasm. The catalysed reaction is tRNA(His) + L-histidine + ATP = L-histidyl-tRNA(His) + AMP + diphosphate + H(+). The chain is Histidine--tRNA ligase (hisS) from Cutibacterium acnes (strain DSM 16379 / KPA171202) (Propionibacterium acnes).